A 1736-amino-acid polypeptide reads, in one-letter code: Collagen alpha-2(XI) chain (1736 aa).

The N-terminal stretch at 1 to 27 (MERCSRCHRLLLFLPLVLGLSAAPGWA) is a signal peptide. In terms of domain architecture, Laminin G-like spans 57 to 228 (DVAYRVARPA…QSCGQKDLEC (172 aa)). The tract at residues 215-486 (QAAYQSCGQK…ILQQARLALR (272 aa)) is nonhelical region. 3 disordered regions span residues 228–270 (CERE…PTES), 364–465 (LSAE…DKGP), and 485–1538 (LRGP…GSPA). Residues 258–269 (PQSQEPQKQPTE) are compositionally biased toward polar residues. 3 Collagen-like domains span residues 399-447 (GPPG…GPPG), 487-545 (GPPG…ADGA), and 546-583 (RGMP…GLPG). The triple-helical region stretch occupies residues 487–1500 (GPPGPMGYTG…PGHPGPPGEV (1014 aa)). Over residues 497 to 533 (RPGPLGQPGSPGLKGESGDLGPQGPRGPQGLTGPPGK) the composition is skewed to low complexity. The span at 615–624 (KGPPGIPGPP) shows a compositional bias: pro residues. A compositionally biased stretch (low complexity) spans 650–668 (QQGTPGAQGLPGPQGAIGP). The 56-residue stretch at 682 to 737 (GMPGSDGLPGHPGKEGPPGTKGNQGPSGPQGPLGYPGPRGVKGVDGIRGLKGHKGE) folds into the Collagen-like 4 domain. A compositionally biased stretch (basic and acidic residues) spans 765–774 (RGEDGPEGPK). 2 stretches are compositionally biased toward low complexity: residues 776-789 (RTGP…TGLM) and 842-861 (PTGP…SGAK). 5 consecutive Collagen-like domains span residues 868-924 (GPHG…PGPP), 967-1025 (GDPG…AAGS), 1026-1055 (GGPI…EKGP), 1056-1086 (IGPT…DGDK), and 1114-1172 (GPVG…ETGD). The span at 994-1003 (GTAGGPGLKG) shows a compositional bias: gly residues. Pro residues predominate over residues 1029-1040 (IGPPGRPGPQGP). Composition is skewed to low complexity over residues 1115-1133 (PVGQ…ARGP) and 1155-1164 (IGLQGLPGPS). Residues 1176-1187 (MGPPGPPGPRGP) are compositionally biased toward pro residues. The span at 1188–1197 (AGPNGADGPQ) shows a compositional bias: low complexity. Gly residues predominate over residues 1198-1207 (GSPGGVGNLG). The span at 1217–1230 (ESGSPGVQGEPGVK) shows a compositional bias: low complexity. The span at 1232–1241 (PRGERGEKGE) shows a compositional bias: basic and acidic residues. Low complexity predominate over residues 1256 to 1272 (PTGDNGPKGNPGPVGFP). A compositionally biased stretch (basic and acidic residues) spans 1287–1296 (DGAKGDRGED). Positions 1376–1386 (QQGRPGATGQA) are enriched in low complexity. Pro residues-rich tracts occupy residues 1388–1397 (PPGPVGPPGL) and 1457–1467 (PGGPPGLPGPS). Collagen-like domains are found at residues 1393-1447 (GPPG…GETG) and 1448-1499 (IPGA…PPGE). Residues 1469–1481 (PKGAKGATGPAGP) show a composition bias toward low complexity. A propeptide spans 1501–1736 (IQPLPIQMPK…VLLGPVCFMG (236 aa)) (C-terminal propeptide). Residues 1541–1735 (EEIFGSLDSL…GVLLGPVCFM (195 aa)) form the Fibrillar collagen NC1 domain. Cys-1571 and Cys-1603 are disulfide-bonded. Ca(2+) contacts are provided by Asp-1589, Asn-1591, Gln-1592, Cys-1594, and Asp-1597. A glycan (N-linked (GlcNAc...) asparagine) is linked at Asn-1604. Intrachain disulfides connect Cys-1612/Cys-1733 and Cys-1655/Cys-1689.

It belongs to the fibrillar collagen family. In terms of assembly, trimers composed of three different chains: alpha 1(XI), alpha 2(XI), and alpha 3(XI). Alpha 3(XI) is a post-translational modification of alpha 1(II). Alpha 1(V) can also be found instead of alpha 3(XI)=1(II). In terms of processing, prolines at the third position of the tripeptide repeating unit (G-X-Y) are hydroxylated in some or all of the chains.

Its subcellular location is the secreted. The protein localises to the extracellular space. It localises to the extracellular matrix. May play an important role in fibrillogenesis by controlling lateral growth of collagen II fibrils. This chain is Collagen alpha-2(XI) chain (Col11a2), found in Mus musculus (Mouse).